The chain runs to 1544 residues: Transcriptional activator GLI3 (1544 aa).

Composition is skewed to polar residues over residues 1 to 10 (MEAQSHSSTT) and 402 to 429 (NPVQ…SSTG). Disordered regions lie at residues 1 to 83 (MEAQ…EERA) and 373 to 477 (SAFG…QEPE). Over residues 463–476 (VKEEGDKDESKQEP) the composition is skewed to basic and acidic residues. The segment at 482 to 509 (TNCHWEGCSREFDTQEQLVHHINNDHIH) adopts a C2H2-type 1 zinc-finger fold. A C2H2-type 2; degenerate zinc finger spans residues 520–542 (LDCSREQKPFKAQYMLVVHMRRH). 3 consecutive C2H2-type zinc fingers follow at residues 548–572 (HKCT…LRSH), 578–603 (YVCE…NRTH), and 609–634 (YVCK…KTVH). Disordered regions lie at residues 622-728 (DPSS…YSNN), 865-919 (RSSG…DLPS), 1126-1155 (SVVL…VSKS), and 1327-1368 (HYQG…GNQS). The span at 634–650 (HGPEAHVTKKQRGDIHP) shows a compositional bias: basic and acidic residues. Over residues 660–685 (SHSQTRSPGQQTQGATGEQKDLNSTT) the composition is skewed to polar residues. The segment covering 686–701 (SRREECLQVKAVKSEK) has biased composition (basic and acidic residues). Residues 702–728 (PMTSQPSPGGQSTCSSEQSPISNYSNN) show a composition bias toward polar residues. A compositionally biased stretch (low complexity) spans 865 to 882 (RSSGISPCFSSRRSSDAS). Over residues 1330-1355 (GVNQSSPMTLGQVSPTSQSSLHQGPQ) the composition is skewed to polar residues.

It belongs to the GLI C2H2-type zinc-finger protein family. In terms of processing, phosphorylation is essential for its proteolytic processing. The repressor form (GLI3R), a C-terminally truncated form is generated from the full-length GLI3 protein (GLI3FL) through proteolytic processing.

The protein localises to the nucleus. The protein resides in the cytoplasm. Has a dual function as a transcriptional activator and a repressor of the sonic hedgehog (Shh) pathway, and plays a role in limb development. The full-length GLI3 form (GLI3FL) acts as an activator (GLI3A) while GLI3R, its C-terminally truncated form, acts as a repressor. The sequence is that of Transcriptional activator GLI3 (GLI3) from Gallus gallus (Chicken).